The primary structure comprises 195 residues: HTH-type transcriptional regulator BetI (195 aa).

The region spanning 8–68 is the HTH tetR-type domain; sequence SIRRRQLIDA…ATMRDITSQL (61 aa). Residues 31–50 constitute a DNA-binding region (H-T-H motif); sequence TIAQIARRAGVSTGIISHYF.

The protein operates within amine and polyamine biosynthesis; betaine biosynthesis via choline pathway [regulation]. Functionally, repressor involved in the biosynthesis of the osmoprotectant glycine betaine. It represses transcription of the choline transporter BetT and the genes of BetAB involved in the synthesis of glycine betaine. The protein is HTH-type transcriptional regulator BetI of Shigella flexneri serotype 5b (strain 8401).